A 357-amino-acid chain; its full sequence is DENN domain-containing protein 10 (357 aa).

The 136-residue stretch at 1–136 folds into the uDENN domain; that stretch reads MAAVVAMDTQ…IAVLTKGICQ (136 aa). One can recognise a cDENN domain in the interval 152 to 299; it reads KAYLAGSIKD…PEKSDSQVIQ (148 aa). Residues 301 to 357 enclose the dDENN domain; sequence IALKTKEIFTHLAPFSEVSDDGGKVILNVEALKQQRFPPATENFLYHLAAAEQMLKV.

Belongs to the DENND10 family. Interacts with the coiled-coil heterodimer of CCDC22 and CCDC93; the interaction is direct. Interacts with RAB27A and RAB27B (GDP-bound forms preferentially).

Its subcellular location is the late endosome. Guanine nucleotide exchange factor (GEF) regulating homeostasis of late endocytic pathway, including endosomal positioning, maturation and secretion, possibly through activating Rab proteins such as RAB27A and RAB27B. Promotes the exchange of GDP to GTP, converting inactive GDP-bound RAB27A and RAB27B into their active GTP-bound form. The polypeptide is DENN domain-containing protein 10 (Mus musculus (Mouse)).